A 485-amino-acid polypeptide reads, in one-letter code: MKFIVKLFPEIMIKSETVRKRFAKILTSNIRNILQKYDEETAVVRHWDYIEVRSKNEENREELIALLQRIPGIHHFLEVEEKPFTDLHHIFELTLADVAQQLQGKTFCVRVKRKGKHKFSSIEAERYIGGGLNQHIESAKVRLKNPDVTVRIDIEDDKMMLVKTRHAGIGGYPIGTQEDVLSLISGGFDSGVSSYMLIRRGSRVHYCFFNLGGAAHEIGVKQMAYHIWQRYSASHKVRFITINFEGVVGEILEKVDNGQMGVVLKRMMVRAASKVAQRFNIEAIVTGEALGQVSSQTLTNLRLIDEAADALVLRPLITHDKEQIIAMAKEIGTDDIAKSMPEFCGVISKNPTIKAVREKILEEEGHFNFEILESSVQNAKYLDIRQIAEETEKEVVEVEAISVLGENEVILDIRSPEETDEKPFESGTHDVIQMPFYKLSSQFGSLDQSKNYVLYCERGVMSKLQALYLKENGFSNVRVFAKNIH.

Residues 61-165 enclose the THUMP domain; sequence EELIALLQRI…DDKMMLVKTR (105 aa). Residues 183 to 184, lysine 265, glycine 287, and glutamine 296 each bind ATP; that span reads LI. Cysteine 344 and cysteine 456 are oxidised to a cystine. Residues 404-483 form the Rhodanese domain; sequence LGENEVILDI…FSNVRVFAKN (80 aa). Cysteine 456 (cysteine persulfide intermediate) is an active-site residue.

It belongs to the ThiI family.

It is found in the cytoplasm. It catalyses the reaction [ThiI sulfur-carrier protein]-S-sulfanyl-L-cysteine + a uridine in tRNA + 2 reduced [2Fe-2S]-[ferredoxin] + ATP + H(+) = [ThiI sulfur-carrier protein]-L-cysteine + a 4-thiouridine in tRNA + 2 oxidized [2Fe-2S]-[ferredoxin] + AMP + diphosphate. The catalysed reaction is [ThiS sulfur-carrier protein]-C-terminal Gly-Gly-AMP + S-sulfanyl-L-cysteinyl-[cysteine desulfurase] + AH2 = [ThiS sulfur-carrier protein]-C-terminal-Gly-aminoethanethioate + L-cysteinyl-[cysteine desulfurase] + A + AMP + 2 H(+). It functions in the pathway cofactor biosynthesis; thiamine diphosphate biosynthesis. Functionally, catalyzes the ATP-dependent transfer of a sulfur to tRNA to produce 4-thiouridine in position 8 of tRNAs, which functions as a near-UV photosensor. Also catalyzes the transfer of sulfur to the sulfur carrier protein ThiS, forming ThiS-thiocarboxylate. This is a step in the synthesis of thiazole, in the thiamine biosynthesis pathway. The sulfur is donated as persulfide by IscS. This is tRNA sulfurtransferase from Haemophilus influenzae (strain 86-028NP).